The chain runs to 933 residues: Progesterone receptor (933 aa).

The interval 1-164 is AF3; mediates transcriptional activation; the sequence is MTELKAKGPR…PATQGVLSPL (164 aa). The interval 1–256 is disordered; sequence MTELKAKGPR…AAAGGGAAAV (256 aa). Residues 1–566 are modulating, Pro-Rich; that stretch reads MTELKAKGPR…YSFESLPQKI (566 aa). Position 20 is a phosphoserine (Ser-20). The LXXL motif 1 motif lies at 55 to 59; it reads LDGLL. The residue at position 81 (Ser-81) is a Phosphoserine. Positions 115–119 match the LXXL motif 2 motif; sequence LETLL. Phosphoserine occurs at positions 130 and 162. A mediates transcriptional transrepression region spans residues 165 to 305; sequence MSRSGGKAGD…LATTVMDFIH (141 aa). Positions 183–187 match the Nuclear localization signal motif; the sequence is KVLPR. Residues Ser-190 and Ser-213 each carry the phosphoserine modification. The segment covering 220 to 231 has biased composition (acidic residues); the sequence is EVEEEDGSESEE. The span at 232-246 shows a compositional bias: low complexity; sequence SAGPLLKGKPRALGG. Ser-294 is modified (phosphoserine; by MAPK1). The segment at 331 to 378 is disordered; sequence GGAGAASAFAPPRSSPSASSTPVAVGDFPDCAYPPDAEPKDDAYPLYS. Residues 335-350 show a composition bias toward low complexity; that stretch reads AASAFAPPRSSPSASS. Ser-345 is modified (phosphoserine; by MAPK). Residue Lys-388 forms a Glycyl lysine isopeptide (Lys-Gly) (interchain with G-Cter in SUMO); alternate linkage. Residue Lys-388 forms a Glycyl lysine isopeptide (Lys-Gly) (interchain with G-Cter in ubiquitin); alternate linkage. Ser-400 bears the Phosphoserine; by CDK2 mark. A disordered region spans residues 415-452; sequence PDFPLGPPPPLPPRAPPSRPGEAAVTAAPASASVSSAS. Pro residues predominate over residues 418–433; the sequence is PLGPPPPLPPRAPPSR. Residues 434–452 are compositionally biased toward low complexity; that stretch reads PGEAAVTAAPASASVSSAS. The segment at 456-546 is AF1; mediates transcriptional activation; the sequence is STLECILYKA…VYPPYLNYLR (91 aa). Lys-531 is covalently cross-linked (Glycyl lysine isopeptide (Lys-Gly) (interchain with G-Cter in SUMO)). 2 NR C4-type zinc fingers span residues 567–587 and 603–627; these read CLICGDEASGCHYGVLTCGSC and CAGRNDCIVDKIRRKNCPACRLRKC. The segment at residues 567-639 is a DNA-binding region (nuclear receptor); the sequence is CLICGDEASG…AGMVLGGRKF (73 aa). Residue Ser-676 is modified to Phosphoserine. The NR LBD domain occupies 679–913; the sequence is QDIQLIPPLI…EFPEMMSEVI (235 aa). An AF2; mediates transcriptional activation region spans residues 687–933; that stretch reads LINLLMSIEP…MVKPLLFHKK (247 aa). Progesterone is bound at residue Arg-766.

It belongs to the nuclear hormone receptor family. In terms of assembly, interacts with SMARD1 and UNC45A. Interacts with CUEDC2; the interaction promotes ubiquitination, decreases sumoylation, and represses transcriptional activity. Interacts with PIAS3; the interaction promotes sumoylation of PR in a hormone-dependent manner, inhibits DNA-binding, and alters nuclear export. Interacts with SP1; the interaction requires ligand-induced phosphorylation on Ser-345 by ERK1/2-MAPK. Interacts with PRMT2. Interacts with NCOA2 and NCOA1. Interacts with KLF9. Interacts with GTF2B. Post-translationally, phosphorylated on multiple serine sites. Several of these sites are hormone-dependent. Phosphorylation on Ser-294 is highly hormone-dependent and modulates ubiquitination and sumoylation on Lys-388. Phosphorylation on Ser-102 and Ser-345 also requires induction by hormone. Basal phosphorylation on Ser-81, Ser-162, Ser-190 and Ser-400 is increased in response to progesterone and can be phosphorylated in vitro by the CDK2-A1 complex. Increased levels of phosphorylation on Ser-400 also in the presence of EGF, heregulin, IGF, PMA and FBS. Phosphorylation at this site by CDK2 is ligand-independent, and increases nuclear translocation and transcriptional activity. Phosphorylation at Ser-162 and Ser-294, but not at Ser-190, is impaired during the G(2)/M phase of the cell cycle. Phosphorylation on Ser-345 by ERK1/2 MAPK is required for interaction with SP1. In terms of processing, sumoylation is hormone-dependent and represses transcriptional activity. Sumoylation on all three sites is enhanced by PIAS3. Desumoylated by SENP1. Sumoylation on Lys-388, the main site of sumoylation, is repressed by ubiquitination on the same site, and modulated by phosphorylation at Ser-294. Ubiquitination is hormone-dependent and represses sumoylation on the same site. Promoted by MAPK-mediated phosphorylation on Ser-294. Ubiquitinated by UBR5, leading to its degradation: UBR5 specifically recognizes and binds ligand-bound PGR when it is not associated with coactivators (NCOAs). In presence of NCOAs, the UBR5-degron is not accessible, preventing its ubiquitination and degradation. Post-translationally, palmitoylated by ZDHHC7 and ZDHHC21. Palmitoylation is required for plasma membrane targeting and for rapid intracellular signaling via ERK and AKT kinases and cAMP generation.

It localises to the nucleus. Its subcellular location is the cytoplasm. Its function is as follows. The steroid hormones and their receptors are involved in the regulation of eukaryotic gene expression and affect cellular proliferation and differentiation in target tissues. Transcriptional activator of several progesteron-dependent promoters in a variety of cell types. Involved in activation of SRC-dependent MAPK signaling on hormone stimulation. The chain is Progesterone receptor (PGR) from Gorilla gorilla gorilla (Western lowland gorilla).